The primary structure comprises 323 residues: Fructokinase-1 (323 aa).

This sequence belongs to the carbohydrate kinase PfkB family. As to expression, expressed in root, endosperm and leaf tissues.

The enzyme catalyses D-fructose + ATP = D-fructose 6-phosphate + ADP + H(+). Its pathway is glycan biosynthesis; starch biosynthesis. Completely inhibited at 50 mM ATP, but not inhibited at high fructose concentration. Its function is as follows. Fructokinase that may play an important role in maintaining the flux of carbon towards starch formation. May also be involved in a sugar-sensing pathway. The sequence is that of Fructokinase-1 from Oryza sativa subsp. japonica (Rice).